We begin with the raw amino-acid sequence, 575 residues long: Glycine--tRNA ligase (575 aa).

2 residues coordinate substrate: Arg-96 and Glu-162. ATP-binding positions include Arg-194–Glu-196, Ile-204–Phe-209, Glu-327–Cys-328, and Gly-450–Arg-453. Position 209–213 (Phe-209–Glu-213) interacts with substrate. Glu-446 to Gly-450 provides a ligand contact to substrate.

This sequence belongs to the class-II aminoacyl-tRNA synthetase family.

Its subcellular location is the cytoplasm. The enzyme catalyses tRNA(Gly) + glycine + ATP = glycyl-tRNA(Gly) + AMP + diphosphate. Catalyzes the attachment of glycine to tRNA(Gly). The chain is Glycine--tRNA ligase from Methanococcus maripaludis (strain C5 / ATCC BAA-1333).